Consider the following 989-residue polypeptide: Putative transcription elongation factor SPT5 homolog 2 (989 aa).

Over residues 1 to 26 (MSQYSDDDYSHEDDSEMEDEDEEDEY) the composition is skewed to acidic residues. A disordered region spans residues 1 to 82 (MSQYSDDDYS…VEDDDDDVDV (82 aa)). The segment covering 31–42 (SRKGRSGKKRGR) has biased composition (basic residues). The span at 65–82 (WEVEVDDDVEDDDDDVDV) shows a compositional bias: acidic residues. 5 consecutive KOW domains span residues 260 to 287 (DLSR…VDNV), 412 to 439 (HFMK…VDEE), 464 to 491 (YFEP…VDQH), 588 to 615 (VVAV…IYKG), and 683 to 710 (DHLV…VKDK). The segment at 790-852 (MSPPRDNWED…SPMTPSSTSY (63 aa)) is disordered. Low complexity predominate over residues 842–852 (PSPMTPSSTSY). The 28-residue stretch at 936–963 (CPKKNERVKILGGKYCGSTAKVIGEDGQ) folds into the KOW 6 domain.

The protein belongs to the SPT5 family.

It is found in the nucleus. Its function is as follows. May regulate transcription elongation by RNA polymerase II. May enhance transcriptional pausing at sites proximal to the promoter, which may in turn facilitate the assembly of an elongation competent RNA polymerase II complex. The polypeptide is Putative transcription elongation factor SPT5 homolog 2 (Arabidopsis thaliana (Mouse-ear cress)).